The primary structure comprises 212 residues: GTP cyclohydrolase 1 (212 aa).

Cys103, His106, and Cys174 together coordinate Zn(2+).

Belongs to the GTP cyclohydrolase I family. As to quaternary structure, toroid-shaped homodecamer, composed of two pentamers of five dimers.

The enzyme catalyses GTP + H2O = 7,8-dihydroneopterin 3'-triphosphate + formate + H(+). The protein operates within cofactor biosynthesis; 7,8-dihydroneopterin triphosphate biosynthesis; 7,8-dihydroneopterin triphosphate from GTP: step 1/1. The chain is GTP cyclohydrolase 1 from Caulobacter vibrioides (strain ATCC 19089 / CIP 103742 / CB 15) (Caulobacter crescentus).